We begin with the raw amino-acid sequence, 382 residues long: DnaJ homolog dnj-20 (382 aa).

The first 21 residues, M1 to C21, serve as a signal peptide directing secretion. The region spanning D24 to G89 is the J domain.

This chain is DnaJ homolog dnj-20, found in Caenorhabditis briggsae.